The sequence spans 928 residues: DNA-binding protein RFX6 (928 aa).

Disordered stretches follow at residues 1-20 (MAKV…APQL) and 50-98 (EGQP…SKTK). The segment at residues 124 to 199 (TLQWLEENYI…YHYYGIGIKE (76 aa)) is a DNA-binding region (RFX-type winged-helix).

It belongs to the RFX family. As to quaternary structure, interacts with RFX3. In terms of tissue distribution, expressed in pancreas. Expressed in pancreatic beta-cells (insulin-positive cells) and alpha-cells (glucagon-positive cells) (at protein level). Specifically expressed in pancreas, small intestine and colon. Expressed in endocrine cells in the islets.

The protein resides in the nucleus. In terms of biological role, transcription factor required to direct islet cell differentiation during endocrine pancreas development. Specifically required for the differentiation of 4 of the 5 islet cell types and for the production of insulin. Not required for pancreatic PP (polypeptide-producing) cells differentiation. Acts downstream of NEUROG3 and regulates the transcription factors involved in beta-cell maturation and function, thereby restricting the expression of the beta-cell differentiation and specification genes, and thus the beta-cell fate choice. Activates transcription by forming a heterodimer with RFX3 and binding to the X-box in the promoter of target genes. Involved in glucose-stimulated insulin secretion by promoting insulin and L-type calcium channel gene transcription. The polypeptide is DNA-binding protein RFX6 (RFX6) (Homo sapiens (Human)).